A 134-amino-acid chain; its full sequence is Small ribosomal subunit protein bS16 (134 aa).

A disordered region spans residues 79 to 134; that stretch reads AGIAKRPSRNNPTKGEPGKKAQERLALAKQAEEEAAAKAAEAAAAAAAPAEEAASE. A compositionally biased stretch (low complexity) spans 115-134; it reads AKAAEAAAAAAAPAEEAASE.

The protein belongs to the bacterial ribosomal protein bS16 family.

The polypeptide is Small ribosomal subunit protein bS16 (Brucella suis (strain ATCC 23445 / NCTC 10510)).